A 247-amino-acid polypeptide reads, in one-letter code: tRNA uridine(34) hydroxylase (247 aa).

The Rhodanese domain maps to 124–218 (TKQDVIVIDT…YLEDTQNKNN (95 aa)). Catalysis depends on Cys-178, which acts as the Cysteine persulfide intermediate.

It belongs to the TrhO family.

The catalysed reaction is uridine(34) in tRNA + AH2 + O2 = 5-hydroxyuridine(34) in tRNA + A + H2O. Functionally, catalyzes oxygen-dependent 5-hydroxyuridine (ho5U) modification at position 34 in tRNAs. The protein is tRNA uridine(34) hydroxylase of Rickettsia massiliae (strain Mtu5).